Consider the following 441-residue polypeptide: Peroxisome proliferator-activated receptor delta (441 aa).

Positions 1 to 22 (MEQPQEEAPEVREEEEKEEVAE) are enriched in acidic residues. The segment at 1–54 (MEQPQEEAPEVREEEEKEEVAEAEGAPELNGGPQHALPSSSYTDLSRSSSPPSL) is disordered. Residues 37–54 (LPSSSYTDLSRSSSPPSL) show a composition bias toward low complexity. The segment at residues 71 to 145 (NMECRVCGDK…LGMSHNAIRF (75 aa)) is a DNA-binding region (nuclear receptor). 2 NR C4-type zinc fingers span residues 74–94 (CRVC…CEGC) and 111–133 (CERS…FQKC). Positions 211-439 (FVIHDIETLW…HPLLQEIYKD (229 aa)) constitute an NR LBD domain.

This sequence belongs to the nuclear hormone receptor family. NR1 subfamily. As to quaternary structure, heterodimer with the retinoid X receptor. Interacts (via domain NR LBD) with CRY1 and CRY2 in a ligand-dependent manner. 'Lys-48'-linked polyubiquitinated; leading to proteasomal degradation. Deubiquitinated and stabilized by OTUD3. In terms of tissue distribution, ubiquitous with maximal levels in placenta and skeletal muscle.

It is found in the nucleus. Its function is as follows. Ligand-activated transcription factor key mediator of energy metabolism in adipose tissues. Receptor that binds peroxisome proliferators such as hypolipidemic drugs and fatty acids. Has a preference for poly-unsaturated fatty acids, such as gamma-linoleic acid and eicosapentanoic acid. Once activated by a ligand, the receptor binds to promoter elements of target genes. Regulates the peroxisomal beta-oxidation pathway of fatty acids. Functions as transcription activator for the acyl-CoA oxidase gene. Decreases expression of NPC1L1 once activated by a ligand. The protein is Peroxisome proliferator-activated receptor delta of Homo sapiens (Human).